Consider the following 891-residue polypeptide: Aconitate hydratase A (891 aa).

3 residues coordinate [4Fe-4S] cluster: Cys435, Cys501, and Cys504.

This sequence belongs to the aconitase/IPM isomerase family. As to quaternary structure, monomer. [4Fe-4S] cluster is required as a cofactor.

It catalyses the reaction citrate = D-threo-isocitrate. The enzyme catalyses (2S,3R)-3-hydroxybutane-1,2,3-tricarboxylate = 2-methyl-cis-aconitate + H2O. It participates in carbohydrate metabolism; tricarboxylic acid cycle; isocitrate from oxaloacetate: step 2/2. The protein operates within organic acid metabolism; propanoate degradation. In terms of biological role, involved in the catabolism of short chain fatty acids (SCFA) via the tricarboxylic acid (TCA)(acetyl degradation route) and the 2-methylcitrate cycle I (propionate degradation route). Catalyzes the reversible isomerization of citrate to isocitrate via cis-aconitate. Also catalyzes the hydration of 2-methyl-cis-aconitate to yield (2R,3S)-2-methylisocitrate. The (2S,3S)-2-methylcitrate (2-MC) is a very poor substrate. The apo form of AcnA functions as a RNA-binding regulatory protein. In Salmonella typhimurium (strain LT2 / SGSC1412 / ATCC 700720), this protein is Aconitate hydratase A (acnA).